A 154-amino-acid polypeptide reads, in one-letter code: Fimbrial protein (154 aa).

Residues 1–6 (MNAQKG) constitute a propeptide, leader sequence. Phenylalanine 7 bears the N-methylphenylalanine mark. Residues 7–29 (FTLIELMIVIAIIGILAAIALPA) form a helical membrane-spanning segment.

This sequence belongs to the N-Me-Phe pilin family. As to quaternary structure, the pili are polar flexible filaments of about 5.4 nanometers diameter and 2.5 micrometers average length; they consist of only a single polypeptide chain arranged in a helical configuration of five subunits per turn in the assembled pilus.

Its subcellular location is the fimbrium. The protein localises to the membrane. The sequence is that of Fimbrial protein (tfpA) from Moraxella nonliquefaciens.